Here is a 425-residue protein sequence, read N- to C-terminus: Serine--tRNA ligase (425 aa).

231-233 lines the L-serine pocket; it reads TAE. Residue 262–264 coordinates ATP; that stretch reads RSE. E285 lines the L-serine pocket. Residue 349–352 coordinates ATP; sequence EISS. L-serine is bound at residue S385.

Belongs to the class-II aminoacyl-tRNA synthetase family. Type-1 seryl-tRNA synthetase subfamily. In terms of assembly, homodimer. The tRNA molecule binds across the dimer.

It localises to the cytoplasm. The catalysed reaction is tRNA(Ser) + L-serine + ATP = L-seryl-tRNA(Ser) + AMP + diphosphate + H(+). It catalyses the reaction tRNA(Sec) + L-serine + ATP = L-seryl-tRNA(Sec) + AMP + diphosphate + H(+). Its pathway is aminoacyl-tRNA biosynthesis; selenocysteinyl-tRNA(Sec) biosynthesis; L-seryl-tRNA(Sec) from L-serine and tRNA(Sec): step 1/1. Its function is as follows. Catalyzes the attachment of serine to tRNA(Ser). Is also able to aminoacylate tRNA(Sec) with serine, to form the misacylated tRNA L-seryl-tRNA(Sec), which will be further converted into selenocysteinyl-tRNA(Sec). The chain is Serine--tRNA ligase from Bartonella quintana (strain Toulouse) (Rochalimaea quintana).